Here is a 259-residue protein sequence, read N- to C-terminus: Ribonuclease T2-B (259 aa).

The signal sequence occupies residues M1–A29. The cysteines at positions 53 and 59 are disulfide-linked. H69 is a catalytic residue. Disulfide bonds link C79-C125, C188-C244, and C206-C217. Residues N80 and N110 are each glycosylated (N-linked (GlcNAc...) asparagine). Catalysis depends on residues E118 and H122. N-linked (GlcNAc...) asparagine glycosylation occurs at N216.

It belongs to the RNase T2 family.

Its subcellular location is the secreted. It localises to the lysosome lumen. The protein resides in the endoplasmic reticulum lumen. The protein localises to the mitochondrion intermembrane space. It catalyses the reaction a ribonucleotidyl-ribonucleotide-RNA + H2O = a 3'-end 3'-phospho-ribonucleotide-RNA + a 5'-end dephospho-ribonucleoside-RNA + H(+). It carries out the reaction an adenylyl-uridine-RNA = a 3'-end 2',3'-cyclophospho-AMP-RNA + a 5'-end dephospho-uridine-RNA. The enzyme catalyses a guanylyl-uridine-RNA = a 3'-end 2',3'-cyclophospho-GMP-RNA + a 5'-end dephospho-uridine-RNA. Its activity is regulated as follows. Inhibited by Zn(2+) and Cu(2+). Functionally, ribonuclease that plays an essential role in innate immune response by recognizing and degrading RNAs from microbial pathogens that are subsequently sensed by TLR8. Cleaves preferentially single-stranded RNA molecules between purine and uridine residues, which critically contributes to the supply of catabolic uridine and the generation of purine-2',3'-cyclophosphate-terminated oligoribonucleotides. In turn, RNase T2 degradation products promote the RNA-dependent activation of TLR8. In plasmacytoid dendritic cells, it cooperates with PLD3 or PLD4 5'-&gt;3' exonucleases to process RNA fragments and release 2',3'-cyclic guanosine monophosphate (2',3'-cGMP), a potent stimulatory ligand for TLR7. Also plays a key role in degradation of mitochondrial RNA and processing of non-coding RNA imported from the cytosol into mitochondria. Participates as well in degradation of mitochondrion-associated cytosolic rRNAs. The polypeptide is Ribonuclease T2-B (Mus musculus (Mouse)).